An 868-amino-acid polypeptide reads, in one-letter code: Probable beta-glucosidase F (868 aa).

The N-terminal stretch at 1–20 (MAHRWLILALVAAAAPRALA) is a signal peptide. Residues 21-40 (SPGPSLNERQSDDEPFSPPY) are disordered. N-linked (GlcNAc...) asparagine glycosylation is found at asparagine 65, asparagine 73, and asparagine 257. Residue aspartate 285 is part of the active site. 5 N-linked (GlcNAc...) asparagine glycosylation sites follow: asparagine 328, asparagine 360, asparagine 395, asparagine 421, and asparagine 726. The segment at 731-752 (YPYPDGYSTDPQPPPRAGGAEG) is disordered.

It belongs to the glycosyl hydrolase 3 family.

It localises to the secreted. It carries out the reaction Hydrolysis of terminal, non-reducing beta-D-glucosyl residues with release of beta-D-glucose.. It functions in the pathway glycan metabolism; cellulose degradation. Functionally, beta-glucosidases are one of a number of cellulolytic enzymes involved in the degradation of cellulosic biomass. Catalyzes the last step releasing glucose from the inhibitory cellobiose. This Emericella nidulans (strain FGSC A4 / ATCC 38163 / CBS 112.46 / NRRL 194 / M139) (Aspergillus nidulans) protein is Probable beta-glucosidase F (bglF).